Reading from the N-terminus, the 457-residue chain is Glycine receptor subunit alpha-1 (457 aa).

Residues 1-28 form the signal peptide; the sequence is MYSFNTLRLYLWETIVFFSLAASKEAEA. Topologically, residues 29-250 are extracellular; sequence ARSASKPMSP…RFHLERQMGY (222 aa). N-linked (GlcNAc...) asparagine glycosylation occurs at asparagine 66. Residues arginine 93 and serine 157 each contribute to the glycine site. A disulfide bridge links cysteine 166 with cysteine 180. Residues glutamate 220 and aspartate 222 each contribute to the Zn(2+) site. The cysteines at positions 226 and 237 are disulfide-linked. Strychnine is bound at residue 230-235; it reads YNTGKF. Glycine is bound at residue threonine 232. Histidine 243 lines the Zn(2+) pocket. The chain crosses the membrane as a helical span at residues 251–272; that stretch reads YLIQMYIPSLLIVILSWISFWI. At 273 to 277 the chain is on the cytoplasmic side; it reads NMDAA. The chain crosses the membrane as a helical span at residues 278–298; it reads PARVGLGITTVLTMTTQSSGS. At 299-309 the chain is on the extracellular side; the sequence is RASLPKVSYVK. Residues 310–330 form a helical membrane-spanning segment; sequence AIDIWMAVCLLFVFSALLEYA. The Cytoplasmic segment spans residues 331-425; sequence AVNFVSRQHK…FIQRAKKIDK (95 aa). Residues 391–410 form a disordered region; the sequence is KGANNSNTTNPPPAPSKSPE. Residues 426–446 traverse the membrane as a helical segment; that stretch reads ISRIGFPMAFLIFNMFYWIIY. At 447 to 457 the chain is on the extracellular side; that stretch reads KIVRREDVHNQ.

This sequence belongs to the ligand-gated ion channel (TC 1.A.9) family. Glycine receptor (TC 1.A.9.3) subfamily. GLRA1 sub-subfamily. As to quaternary structure, interacts with GLRB to form heteropentameric channels; this is probably the predominant form in vivo. Heteropentamer composed of four GLRA1 subunits and one GLRB subunit. Heteropentamer composed of two GLRA1 and three GLRB. Heteropentamer composed of three GLRA1 and two GLRB. Homopentamer (in vitro). Both homopentamers and heteropentamers form functional ion channels, but their characteristics are subtly different. As to expression, detected on spinal cord neurons (at protein level). Detected in spinal cord.

Its subcellular location is the postsynaptic cell membrane. It is found in the synapse. The protein resides in the perikaryon. It localises to the cell projection. The protein localises to the dendrite. Its subcellular location is the cell membrane. It carries out the reaction chloride(in) = chloride(out). With respect to regulation, channel opening is triggered by extracellular glycine. Channel characteristics depend on the subunit composition; heteropentameric channels are activated by lower glycine levels and display faster desensitization. Functionally, subunit of heteromeric glycine-gated chloride channels. Plays an important role in the down-regulation of neuronal excitability. Contributes to the generation of inhibitory postsynaptic currents. Channel activity is potentiated by ethanol. Potentiation of channel activity by intoxicating levels of ethanol contribute to the sedative effects of ethanol. This Bos taurus (Bovine) protein is Glycine receptor subunit alpha-1 (GLRA1).